A 314-amino-acid polypeptide reads, in one-letter code: Olfactory receptor 2Z1 (314 aa).

Topologically, residues 1 to 25 (MGDVNQSVASDFILVGLFSHSGSRQ) are extracellular. The N-linked (GlcNAc...) asparagine glycan is linked to asparagine 5. Residues 26-49 (LLFSLVAVMFVIGLLGNTVLLFLI) form a helical membrane-spanning segment. At 50-57 (RVDSRLHT) the chain is on the cytoplasmic side. A helical transmembrane segment spans residues 58–79 (PMYFLLSQLSLFDIGCPMVTIP). Residues 80–100 (KMASDFLRGEGATSYGGGAAQ) are Extracellular-facing. A helical transmembrane segment spans residues 101–120 (IFFLTLMGVAEGVLLVLMSY). Residues 121 to 139 (DRYVAVCQPLQYPVLMRRQ) lie on the Cytoplasmic side of the membrane. Residues 140–158 (VCLLMMGSSWVVGVLNASI) traverse the membrane as a helical segment. Topologically, residues 159-195 (QTSITLHFPYCASRIVDHFFCEVPALLKLSCADTCAY) are extracellular. Residues 196 to 219 (EMALSTSGVLILMLPLSLIATSYG) traverse the membrane as a helical segment. The Cytoplasmic portion of the chain corresponds to 220–236 (HVLQAVLSMRSEEARHK). The helical transmembrane segment at 237–259 (AVTTCSSHITVVGLFYGAAVFMY) threads the bilayer. The Extracellular segment spans residues 260-272 (MVPCAYHSPQQDN). The helical transmembrane segment at 273 to 292 (VVSLFYSLVTPTLNPLIYSL) threads the bilayer. Residues 293–314 (RNPEVWMALVKVLSRAGLRQMC) lie on the Cytoplasmic side of the membrane.

It belongs to the G-protein coupled receptor 1 family.

The protein resides in the cell membrane. In terms of biological role, odorant receptor. The chain is Olfactory receptor 2Z1 (OR2Z1) from Homo sapiens (Human).